The sequence spans 340 residues: Immunoglobulin-binding protein 1 family member C (340 aa).

2 disordered regions span residues 223 to 243 (KDSS…PPMK) and 292 to 340 (PEEF…QNMG). Residues 303–314 (EDQEKEEEDDEQ) are compositionally biased toward acidic residues. The segment covering 318 to 330 (RAREWDDWKDTHP) has biased composition (basic and acidic residues).

The protein belongs to the IGBP1/TAP42 family.

The chain is Immunoglobulin-binding protein 1 family member C from Homo sapiens (Human).